Reading from the N-terminus, the 196-residue chain is Putative 3-methyladenine DNA glycosylase (196 aa).

It belongs to the DNA glycosylase MPG family.

This is Putative 3-methyladenine DNA glycosylase from Chlorobium phaeovibrioides (strain DSM 265 / 1930) (Prosthecochloris vibrioformis (strain DSM 265)).